The chain runs to 127 residues: Glycine cleavage system H protein (127 aa).

A Lipoyl-binding domain is found at 22–104; sequence EAVIGITQFA…YTDGWMVRVK (83 aa). Lys-63 bears the N6-lipoyllysine mark.

The protein belongs to the GcvH family. In terms of assembly, the glycine cleavage system is composed of four proteins: P, T, L and H. Requires (R)-lipoate as cofactor.

Functionally, the glycine cleavage system catalyzes the degradation of glycine. The H protein shuttles the methylamine group of glycine from the P protein to the T protein. The sequence is that of Glycine cleavage system H protein from Nitratidesulfovibrio vulgaris (strain DSM 19637 / Miyazaki F) (Desulfovibrio vulgaris).